The primary structure comprises 203 residues: Urease accessory protein UreG (203 aa).

Position 10-17 (10-17 (GPVGAGKT)) interacts with GTP.

It belongs to the SIMIBI class G3E GTPase family. UreG subfamily. In terms of assembly, homodimer. UreD, UreF and UreG form a complex that acts as a GTP-hydrolysis-dependent molecular chaperone, activating the urease apoprotein by helping to assemble the nickel containing metallocenter of UreC. The UreE protein probably delivers the nickel.

Its subcellular location is the cytoplasm. Facilitates the functional incorporation of the urease nickel metallocenter. This process requires GTP hydrolysis, probably effectuated by UreG. The polypeptide is Urease accessory protein UreG (Micrococcus luteus (strain ATCC 4698 / DSM 20030 / JCM 1464 / CCM 169 / CCUG 5858 / IAM 1056 / NBRC 3333 / NCIMB 9278 / NCTC 2665 / VKM Ac-2230) (Micrococcus lysodeikticus)).